A 362-amino-acid chain; its full sequence is mRNA decay activator protein ZFP36L2 (362 aa).

Positions 100–109 are enriched in basic and acidic residues; sequence SFSENGERSQ. Positions 100-126 are disordered; sequence SFSENGERSQHLLHLQQQQQQKAGAQV. Over residues 111-120 the composition is skewed to low complexity; the sequence is LLHLQQQQQQ. The RNA-binding motif lies at 130–135; it reads RYKTEL. 2 consecutive C3H1-type zinc fingers follow at residues 130-158 and 168-196; these read RYKT…HGFH and KYKT…HNAE. The interval 147–188 is RNA-binding; sequence YGEKCQFAHGFHELRSLTRHPKYKTELCRTFHTIGFCPYGPR. 2 disordered regions span residues 225 to 244 and 306 to 362; these read DSPL…SSSS and SESP…ISDD. Residues 327 to 346 are compositionally biased toward low complexity; it reads YLSGSLSSGSLSGSDSPTLD.

In terms of processing, phosphorylated.

The protein resides in the nucleus. Its subcellular location is the cytoplasm. Zinc-finger RNA-binding protein that destabilizes several cytoplasmic AU-rich element (ARE)-containing mRNA transcripts by promoting their poly(A) tail removal or deadenylation, and hence provide a mechanism for attenuating protein synthesis. Acts as a 3'-untranslated region (UTR) ARE mRNA-binding adapter protein to communicate signaling events to the mRNA decay machinery. Functions by recruiting the CCR4-NOT deadenylase complex and probably other components of the cytoplasmic RNA decay machinery to the bound ARE-containing mRNAs, and hence promotes ARE-mediated mRNA deadenylation and decay processes. Binds to 3'-UTR ARE of numerous mRNAs. Also induces the degradation of ARE-containing mRNAs even in absence of poly(A) tail. Required for tubulogenesis during pronephros development. This chain is mRNA decay activator protein ZFP36L2 (zfp36l2), found in Xenopus tropicalis (Western clawed frog).